Here is a 164-residue protein sequence, read N- to C-terminus: ATP synthase subunit b (164 aa).

Residues 10–32 (AVAFVLFFVLFGKKLWTPLAAAL) traverse the membrane as a helical segment.

It belongs to the ATPase B chain family. In terms of assembly, F-type ATPases have 2 components, F(1) - the catalytic core - and F(0) - the membrane proton channel. F(1) has five subunits: alpha(3), beta(3), gamma(1), delta(1), epsilon(1). F(0) has three main subunits: a(1), b(2) and c(10-14). The alpha and beta chains form an alternating ring which encloses part of the gamma chain. F(1) is attached to F(0) by a central stalk formed by the gamma and epsilon chains, while a peripheral stalk is formed by the delta and b chains.

Its subcellular location is the cell inner membrane. Functionally, f(1)F(0) ATP synthase produces ATP from ADP in the presence of a proton or sodium gradient. F-type ATPases consist of two structural domains, F(1) containing the extramembraneous catalytic core and F(0) containing the membrane proton channel, linked together by a central stalk and a peripheral stalk. During catalysis, ATP synthesis in the catalytic domain of F(1) is coupled via a rotary mechanism of the central stalk subunits to proton translocation. Its function is as follows. Component of the F(0) channel, it forms part of the peripheral stalk, linking F(1) to F(0). The sequence is that of ATP synthase subunit b from Gluconacetobacter diazotrophicus (strain ATCC 49037 / DSM 5601 / CCUG 37298 / CIP 103539 / LMG 7603 / PAl5).